A 102-amino-acid polypeptide reads, in one-letter code: Small ribosomal subunit protein uS10 (102 aa).

It belongs to the universal ribosomal protein uS10 family. In terms of assembly, part of the 30S ribosomal subunit.

In terms of biological role, involved in the binding of tRNA to the ribosomes. The sequence is that of Small ribosomal subunit protein uS10 from Clostridium perfringens (strain ATCC 13124 / DSM 756 / JCM 1290 / NCIMB 6125 / NCTC 8237 / Type A).